A 513-amino-acid polypeptide reads, in one-letter code: OBERON-like protein (513 aa).

The segment at 166 to 235 (NGFCNLCMCV…VFRCQACSXT (70 aa)) adopts a PHD-type zinc-finger fold. The stretch at 372–469 (RELADKAREA…LYEKIKLQES (98 aa)) forms a coiled coil. Residues 493 to 513 (YNGPPKADSQSNDCHPFRTNP) form a disordered region. The segment covering 500-513 (DSQSNDCHPFRTNP) has biased composition (polar residues).

As to quaternary structure, self-interacts and probably forms heteromers. Binds to VPg of pea seed borne mosaic virus (PSbMV), turnip mosaic virus (TuMV) and lettuce mosaic virus (LMV), but not with VPg of tobacco etch virus (TEV), cowpea mosaic virus (CPMV), tomato black ring virus (TBRV) and grapevine fan leaf virus (GFLV).

Its subcellular location is the nucleus. In terms of biological role, required for the maintenance and/or establishment of both the shoot and root meristems, probably by controlling the expression of the meristem genes and of genes required for auxin responses. Involved in the development of the basal pole and in auxin-mediated root and vascular development in the embryo. Confers sensitivity to turnip mosaic virus (TuMV) probably by promoting viral movement and multiplication via interaction with TuMV VPg. This is OBERON-like protein (PVIP) from Pisum sativum (Garden pea).